The chain runs to 477 residues: POC1 centriolar protein homolog B (477 aa).

WD repeat units lie at residues G16–R55, G58–E97, A100–S139, R142–N181, S183–H223, V226–T265, and G268–R307. A coiled-coil region spans residues E449–L469.

Belongs to the WD repeat POC1 family. As to quaternary structure, interacts with POC1A. Interacts with FAM161A. Interacts with CEP44; the interaction is direct and recruits POC1B to centriolar microtubules. Forms a microtubule-associated complex with POC5, CETN2 and FAM161A. Interacts with CCDC15. In terms of processing, phosphorylated in mitotic cells that may be mediated by CDK1.

It is found in the cytoplasm. The protein resides in the cytoskeleton. It localises to the microtubule organizing center. The protein localises to the centrosome. Its subcellular location is the centriole. It is found in the cilium basal body. The protein resides in the spindle pole. Plays an important role in centriole assembly and/or stability and ciliogenesis. Involved in early steps of centriole duplication, as well as in the later steps of centriole length control. Acts in concert with POC1A to ensure centriole integrity and proper mitotic spindle formation. Required for primary cilia formation, ciliary length and also cell proliferation. Required for retinal integrity. Acts as a positive regulator of centriole elongation. In Rattus norvegicus (Rat), this protein is POC1 centriolar protein homolog B (Poc1b).